The chain runs to 509 residues: Photosystem II CP47 reaction center protein (509 aa).

Helical transmembrane passes span 21–36, 101–115, 140–156, 203–218, 237–253, and 458–473; these read AVHMMHTALVAGWAGS, IVFSGLCFLAAIWHW, GIHLFLSGVACFGFGAF, IAAGTLGILAGLFHLS, VLSSSSIAAVFFAAFVV, and SFALLFFFGHIWHGSR.

It belongs to the PsbB/PsbC family. PsbB subfamily. In terms of assembly, PSII is composed of 1 copy each of membrane proteins PsbA, PsbB, PsbC, PsbD, PsbE, PsbF, PsbH, PsbI, PsbJ, PsbK, PsbL, PsbM, PsbT, PsbX, PsbY, PsbZ, Psb30/Ycf12, at least 3 peripheral proteins of the oxygen-evolving complex and a large number of cofactors. It forms dimeric complexes. Binds multiple chlorophylls. PSII binds additional chlorophylls, carotenoids and specific lipids. serves as cofactor.

Its subcellular location is the plastid. It localises to the chloroplast thylakoid membrane. Functionally, one of the components of the core complex of photosystem II (PSII). It binds chlorophyll and helps catalyze the primary light-induced photochemical processes of PSII. PSII is a light-driven water:plastoquinone oxidoreductase, using light energy to abstract electrons from H(2)O, generating O(2) and a proton gradient subsequently used for ATP formation. The polypeptide is Photosystem II CP47 reaction center protein (Populus deltoides (Eastern poplar)).